Reading from the N-terminus, the 293-residue chain is Formamidopyrimidine-DNA glycosylase (293 aa).

The active-site Schiff-base intermediate with DNA is Pro-2. Glu-3 acts as the Proton donor in catalysis. Lys-58 serves as the catalytic Proton donor; for beta-elimination activity. DNA-binding residues include His-104, Arg-123, and Lys-166. Residues 257–293 (AAYDREGERCRTDGCGGAVKRFVQNGRSTFWCSGCQK) form an FPG-type zinc finger. The active-site Proton donor; for delta-elimination activity is Arg-283.

This sequence belongs to the FPG family. In terms of assembly, monomer. Requires Zn(2+) as cofactor.

It carries out the reaction Hydrolysis of DNA containing ring-opened 7-methylguanine residues, releasing 2,6-diamino-4-hydroxy-5-(N-methyl)formamidopyrimidine.. The catalysed reaction is 2'-deoxyribonucleotide-(2'-deoxyribose 5'-phosphate)-2'-deoxyribonucleotide-DNA = a 3'-end 2'-deoxyribonucleotide-(2,3-dehydro-2,3-deoxyribose 5'-phosphate)-DNA + a 5'-end 5'-phospho-2'-deoxyribonucleoside-DNA + H(+). Functionally, involved in base excision repair of DNA damaged by oxidation or by mutagenic agents. Acts as a DNA glycosylase that recognizes and removes damaged bases. Has a preference for oxidized purines, such as 7,8-dihydro-8-oxoguanine (8-oxoG). Has AP (apurinic/apyrimidinic) lyase activity and introduces nicks in the DNA strand. Cleaves the DNA backbone by beta-delta elimination to generate a single-strand break at the site of the removed base with both 3'- and 5'-phosphates. The polypeptide is Formamidopyrimidine-DNA glycosylase (Rhodopseudomonas palustris (strain BisB5)).